The following is a 357-amino-acid chain: tRNA N6-adenosine threonylcarbamoyltransferase (357 aa).

The Fe cation site is built by H119 and H123. Residues 141-145 (LISGG), D174, G187, and N284 each bind substrate. D312 lines the Fe cation pocket.

It belongs to the KAE1 / TsaD family. It depends on Fe(2+) as a cofactor.

The protein localises to the cytoplasm. The enzyme catalyses L-threonylcarbamoyladenylate + adenosine(37) in tRNA = N(6)-L-threonylcarbamoyladenosine(37) in tRNA + AMP + H(+). Functionally, required for the formation of a threonylcarbamoyl group on adenosine at position 37 (t(6)A37) in tRNAs that read codons beginning with adenine. Is involved in the transfer of the threonylcarbamoyl moiety of threonylcarbamoyl-AMP (TC-AMP) to the N6 group of A37, together with TsaE and TsaB. TsaD likely plays a direct catalytic role in this reaction. The chain is tRNA N6-adenosine threonylcarbamoyltransferase from Pelagibacter ubique (strain HTCC1062).